We begin with the raw amino-acid sequence, 156 residues long: Large ribosomal subunit protein uL30 (156 aa).

Belongs to the universal ribosomal protein uL30 family. In terms of assembly, part of the 50S ribosomal subunit.

The polypeptide is Large ribosomal subunit protein uL30 (Sulfolobus acidocaldarius (strain ATCC 33909 / DSM 639 / JCM 8929 / NBRC 15157 / NCIMB 11770)).